A 146-amino-acid polypeptide reads, in one-letter code: Hemoglobin subunit beta-1 (146 aa).

Residues 2 to 146 (HWTAEEKHLL…VAHALARRYH (145 aa)) enclose the Globin domain. Heme b contacts are provided by His-63 and His-92.

Belongs to the globin family. In terms of assembly, there are three forms of hemoglobin in Sphenodon: A, A' and D. Hb A is a tetramer of two alpha-A and two beta-1, Hb A' is a tetramer of two alpha-a and two beta-2, Hb D is a tetramer of two alpha-D and two beta-2.

Functionally, involved in oxygen transport from the lung to the various peripheral tissues. This Sphenodon punctatus (Tuatara) protein is Hemoglobin subunit beta-1 (HBB1).